The primary structure comprises 302 residues: Methionyl-tRNA formyltransferase (302 aa).

(6S)-5,6,7,8-tetrahydrofolate is bound at residue 108–111 (SLLP).

The protein belongs to the Fmt family.

It carries out the reaction L-methionyl-tRNA(fMet) + (6R)-10-formyltetrahydrofolate = N-formyl-L-methionyl-tRNA(fMet) + (6S)-5,6,7,8-tetrahydrofolate + H(+). In terms of biological role, attaches a formyl group to the free amino group of methionyl-tRNA(fMet). The formyl group appears to play a dual role in the initiator identity of N-formylmethionyl-tRNA by promoting its recognition by IF2 and preventing the misappropriation of this tRNA by the elongation apparatus. In Cereibacter sphaeroides (strain ATCC 17025 / ATH 2.4.3) (Rhodobacter sphaeroides), this protein is Methionyl-tRNA formyltransferase.